Reading from the N-terminus, the 70-residue chain is Putative membrane protein insertion efficiency factor (70 aa).

It belongs to the UPF0161 family.

The protein resides in the cell membrane. Could be involved in insertion of integral membrane proteins into the membrane. The protein is Putative membrane protein insertion efficiency factor of Chloroflexus aurantiacus (strain ATCC 29366 / DSM 635 / J-10-fl).